Reading from the N-terminus, the 752-residue chain is Probable beta-glucosidase D (752 aa).

The first 18 residues, 1 to 18 (MRFVSLAVGAALLGAAGA), serve as a signal peptide directing secretion. 2 N-linked (GlcNAc...) asparagine glycosylation sites follow: Asn-187 and Asn-237. Residue Asp-265 is part of the active site. 10 N-linked (GlcNAc...) asparagine glycosylation sites follow: Asn-299, Asn-343, Asn-441, Asn-510, Asn-532, Asn-571, Asn-586, Asn-638, Asn-661, and Asn-743.

Belongs to the glycosyl hydrolase 3 family.

It is found in the secreted. It catalyses the reaction Hydrolysis of terminal, non-reducing beta-D-glucosyl residues with release of beta-D-glucose.. Its pathway is glycan metabolism; cellulose degradation. Functionally, beta-glucosidases are one of a number of cellulolytic enzymes involved in the degradation of cellulosic biomass. Catalyzes the last step releasing glucose from the inhibitory cellobiose. The sequence is that of Probable beta-glucosidase D (bglD) from Aspergillus flavus (strain ATCC 200026 / FGSC A1120 / IAM 13836 / NRRL 3357 / JCM 12722 / SRRC 167).